The following is a 481-amino-acid chain: Protein nucleotidyltransferase YdiU (481 aa).

The ATP site is built by Gly87, Gly89, Arg90, Lys110, Asp122, Gly123, Arg173, and Arg180. Asp249 (proton acceptor) is an active-site residue. Residues Asn250 and Asp259 each contribute to the Mg(2+) site. Asp259 is a binding site for ATP.

The protein belongs to the SELO family. The cofactor is Mg(2+). Mn(2+) is required as a cofactor.

The catalysed reaction is L-seryl-[protein] + ATP = 3-O-(5'-adenylyl)-L-seryl-[protein] + diphosphate. The enzyme catalyses L-threonyl-[protein] + ATP = 3-O-(5'-adenylyl)-L-threonyl-[protein] + diphosphate. It carries out the reaction L-tyrosyl-[protein] + ATP = O-(5'-adenylyl)-L-tyrosyl-[protein] + diphosphate. It catalyses the reaction L-histidyl-[protein] + UTP = N(tele)-(5'-uridylyl)-L-histidyl-[protein] + diphosphate. The catalysed reaction is L-seryl-[protein] + UTP = O-(5'-uridylyl)-L-seryl-[protein] + diphosphate. The enzyme catalyses L-tyrosyl-[protein] + UTP = O-(5'-uridylyl)-L-tyrosyl-[protein] + diphosphate. Nucleotidyltransferase involved in the post-translational modification of proteins. It can catalyze the addition of adenosine monophosphate (AMP) or uridine monophosphate (UMP) to a protein, resulting in modifications known as AMPylation and UMPylation. The polypeptide is Protein nucleotidyltransferase YdiU (Mycobacterium sp. (strain KMS)).